The following is a 170-amino-acid chain: uncharacterized protein (170 aa).

The region spanning M1–T148 is the Ferritin-like diiron domain.

This is an uncharacterized protein from Ureaplasma parvum serovar 3 (strain ATCC 700970).